A 367-amino-acid chain; its full sequence is Glycolate oxidase 1 (367 aa).

Residue methionine 1 is modified to N-acetylmethionine. Tyrosine 24 contributes to the glyoxylate binding site. Residues 77–79, serine 106, 127–129, and threonine 155 contribute to the FMN site; these read PTA and QLY. Position 129 (tyrosine 129) interacts with glyoxylate. Position 164 (arginine 164) interacts with glyoxylate. Residues lysine 230 and serine 252 each coordinate FMN. Glyoxylate-binding residues include histidine 254 and arginine 257. Histidine 254 (proton acceptor) is an active-site residue. Residues 285-289 and 308-309 contribute to the FMN site; these read DGGVR and GR.

It belongs to the FMN-dependent alpha-hydroxy acid dehydrogenase family. As to quaternary structure, homotetramer. FMN serves as cofactor.

Its subcellular location is the peroxisome. The enzyme catalyses glycolate + O2 = glyoxylate + H2O2. It functions in the pathway photosynthesis; photorespiration; glycine from 2-phosphoglycolate: step 2/3. Catalyzes the oxidation of glycolate to glyoxylate, with a reduction of O2 to H2O2. Is a key enzyme in photorespiration in green plants. The chain is Glycolate oxidase 1 (GLO1) from Arabidopsis thaliana (Mouse-ear cress).